A 381-amino-acid polypeptide reads, in one-letter code: Estradiol 17-beta-dehydrogenase 2 (381 aa).

Residues 4 to 24 form a helical; Signal-anchor for type II membrane protein membrane-spanning segment; sequence FSSESAWLCLTATAVLGGMLL. 83–112 contacts NAD(+); it reads QKAVLVTGADSGFGHALAKHLDKLGFTVFA. Serine 220 is a binding site for substrate. Tyrosine 233 functions as the Proton acceptor in the catalytic mechanism.

It belongs to the short-chain dehydrogenases/reductases (SDR) family. Homodimer. As to expression, highly expressed in the placenta, and in the small intestine, and liver.

It localises to the endoplasmic reticulum membrane. It carries out the reaction 17beta-estradiol + NAD(+) = estrone + NADH + H(+). It catalyses the reaction testosterone + NAD(+) = androst-4-ene-3,17-dione + NADH + H(+). The catalysed reaction is 17beta-hydroxy-5alpha-androstan-3-one + NAD(+) = 5alpha-androstan-3,17-dione + NADH + H(+). The enzyme catalyses (20S)-hydroxypregn-4-en-3-one + NAD(+) = progesterone + NADH + H(+). In terms of biological role, catalyzes the NAD-dependent oxidation of highly active 17beta-hydroxysteroids, such as estradiol (E2), testosterone (T), and dihydrotestosterone (DHT), to their less active forms and thus regulates the biological potency of these steroids. Oxidizes estradiol to estrone, testosterone to androstenedione, and dihydrotestosterone to 5alpha-androstan-3,17-dione. Also has 20-alpha-HSD activity. The sequence is that of Estradiol 17-beta-dehydrogenase 2 (Hsd17b2) from Rattus norvegicus (Rat).